Reading from the N-terminus, the 245-residue chain is Cypemycin N-terminal methyltransferase (245 aa).

This sequence belongs to the methyltransferase superfamily.

It carries out the reaction N-terminal L-alanyl-[cypemycin] + 2 S-adenosyl-L-methionine = N-terminal N,N-dimethyl-L-alanyl-[cypemycin] + 2 S-adenosyl-L-homocysteine + 3 H(+). Involved in the biosynthesis of the lanaridin cypemycin. The enzyme can methylate a variety of oligopeptides, cyclic peptides and the epsilon-amino group of lysine. The chain is Cypemycin N-terminal methyltransferase from Streptomyces sp.